The chain runs to 689 residues: DNA topoisomerase 1 (689 aa).

Residues 3–113 form the Toprim domain; the sequence is DNLVIVESPA…KENRVVFNEI (111 aa). Mg(2+) is bound by residues Glu-9 and Asp-82. Residues 129 to 557 form the Topo IA-type catalytic domain; that stretch reads EMNLVDAQQA…FFSSFKQDVE (429 aa). The tract at residues 163 to 168 is interaction with DNA; it reads SAGRVQ. Catalysis depends on Tyr-298, which acts as the O-(5'-phospho-DNA)-tyrosine intermediate. The interval 328–357 is disordered; that stretch reads SKRKASGKQGDQDAHEAIRPSSTMRTPDDM. C4-type zinc fingers lie at residues 577-603, 617-645, and 658-681; these read CEVCGSPMVIKMGRYGKFMACSNFPDC, CPKCNDGDVVERKSKKNRVFYGCSKYPEC, and CPKCNQYLVENKKGKTTQVICSNC.

It belongs to the type IA topoisomerase family. As to quaternary structure, monomer. It depends on Mg(2+) as a cofactor.

The enzyme catalyses ATP-independent breakage of single-stranded DNA, followed by passage and rejoining.. Its function is as follows. Releases the supercoiling and torsional tension of DNA, which is introduced during the DNA replication and transcription, by transiently cleaving and rejoining one strand of the DNA duplex. Introduces a single-strand break via transesterification at a target site in duplex DNA. The scissile phosphodiester is attacked by the catalytic tyrosine of the enzyme, resulting in the formation of a DNA-(5'-phosphotyrosyl)-enzyme intermediate and the expulsion of a 3'-OH DNA strand. The free DNA strand then undergoes passage around the unbroken strand, thus removing DNA supercoils. Finally, in the religation step, the DNA 3'-OH attacks the covalent intermediate to expel the active-site tyrosine and restore the DNA phosphodiester backbone. This chain is DNA topoisomerase 1, found in Staphylococcus aureus.